The sequence spans 116 residues: Large ribosomal subunit protein bL19 (116 aa).

This sequence belongs to the bacterial ribosomal protein bL19 family.

In terms of biological role, this protein is located at the 30S-50S ribosomal subunit interface and may play a role in the structure and function of the aminoacyl-tRNA binding site. In Nocardioides sp. (strain ATCC BAA-499 / JS614), this protein is Large ribosomal subunit protein bL19.